The chain runs to 90 residues: Small ribosomal subunit protein bS16 (90 aa).

This sequence belongs to the bacterial ribosomal protein bS16 family.

The sequence is that of Small ribosomal subunit protein bS16 from Streptococcus pneumoniae (strain Hungary19A-6).